A 100-amino-acid polypeptide reads, in one-letter code: Nucleoid-associated protein HPSH_00175 (100 aa).

The protein belongs to the YbaB/EbfC family. As to quaternary structure, homodimer.

The protein localises to the cytoplasm. Its subcellular location is the nucleoid. Functionally, binds to DNA and alters its conformation. May be involved in regulation of gene expression, nucleoid organization and DNA protection. This is Nucleoid-associated protein HPSH_00175 from Helicobacter pylori (strain Shi470).